We begin with the raw amino-acid sequence, 509 residues long: Probable cytochrome P450 6a14 (509 aa).

Cys-454 contributes to the heme binding site.

Belongs to the cytochrome P450 family. Requires heme as cofactor.

It localises to the endoplasmic reticulum membrane. Its subcellular location is the microsome membrane. In terms of biological role, may be involved in the metabolism of insect hormones and in the breakdown of synthetic insecticides. The polypeptide is Probable cytochrome P450 6a14 (Cyp6a14) (Drosophila melanogaster (Fruit fly)).